Consider the following 225-residue polypeptide: Esterase OVCA2 (225 aa).

Residues Ser119, Asp177, and His204 each act as charge relay system in the active site.

This sequence belongs to the LovG family. As to expression, strongly expressed in kidney and liver. Moderately expressed in brain, skin and testis. Weakly expressed in heart, lung, small intestine, spleen, stomach and thymus.

The enzyme catalyses a carboxylic ester + H2O = an alcohol + a carboxylate + H(+). Exhibits ester hydrolase activity with a strong preference for long-chain alkyl ester substrates and high selectivity against a variety of short, branched, and substituted esters. Is able to hydrolyze ester bonds within a wide range of p-nitrophenyl derivatives (C2-C14) in vitro, with a strong preference toward substrates of &gt;8 carbons. In Mus musculus (Mouse), this protein is Esterase OVCA2 (Ovca2).